The sequence spans 272 residues: 3-methyl-2-oxobutanoate hydroxymethyltransferase (272 aa).

The Mg(2+) site is built by Asp43 and Asp82. Residues 43–44 (DS), Asp82, and Lys112 each bind 3-methyl-2-oxobutanoate. A Mg(2+)-binding site is contributed by Glu114. Residue Glu179 is the Proton acceptor of the active site.

This sequence belongs to the PanB family. Homodecamer; pentamer of dimers. Mg(2+) is required as a cofactor.

The protein resides in the cytoplasm. It catalyses the reaction 3-methyl-2-oxobutanoate + (6R)-5,10-methylene-5,6,7,8-tetrahydrofolate + H2O = 2-dehydropantoate + (6S)-5,6,7,8-tetrahydrofolate. Its pathway is cofactor biosynthesis; (R)-pantothenate biosynthesis; (R)-pantoate from 3-methyl-2-oxobutanoate: step 1/2. Catalyzes the reversible reaction in which hydroxymethyl group from 5,10-methylenetetrahydrofolate is transferred onto alpha-ketoisovalerate to form ketopantoate. The polypeptide is 3-methyl-2-oxobutanoate hydroxymethyltransferase (Staphylococcus aureus (strain MRSA252)).